We begin with the raw amino-acid sequence, 301 residues long: Probable splicing factor ECU05_1440 (301 aa).

Residues 1-70 (MQIFIGKIPN…APISVERANG (70 aa)) enclose the RRM 1 domain. Disordered regions lie at residues 106-140 (PPMR…SFRM) and 255-301 (SKDE…AEND). Basic and acidic residues-rich tracts occupy residues 110 to 140 (YESR…SFRM) and 255 to 270 (SKDE…HMRS). Residues 182-255 (LKVVFENIAP…HILKTRSYLS (74 aa)) form the RRM 2 domain.

It belongs to the splicing factor SR family.

The protein resides in the nucleus. In terms of biological role, plays a role in splicing. The chain is Probable splicing factor ECU05_1440 from Encephalitozoon cuniculi (strain GB-M1) (Microsporidian parasite).